The primary structure comprises 623 residues: Membrane protein insertase YidC (623 aa).

A run of 5 helical transmembrane segments spans residues 8 to 28 (LILA…LFPP), 379 to 399 (MGLA…PLAY), 449 to 469 (LPIL…FVTI), 507 to 527 (TTMA…SMWL), and 543 to 563 (IFAW…SGLV). Positions 601–617 (KPAAQPAGKAANDGAAP) are enriched in low complexity. A disordered region spans residues 601–623 (KPAAQPAGKAANDGAAPAKKRKP).

This sequence belongs to the OXA1/ALB3/YidC family. Type 1 subfamily. Interacts with the Sec translocase complex via SecD. Specifically interacts with transmembrane segments of nascent integral membrane proteins during membrane integration.

It localises to the cell inner membrane. Required for the insertion and/or proper folding and/or complex formation of integral membrane proteins into the membrane. Involved in integration of membrane proteins that insert both dependently and independently of the Sec translocase complex, as well as at least some lipoproteins. Aids folding of multispanning membrane proteins. This Cereibacter sphaeroides (strain ATCC 17029 / ATH 2.4.9) (Rhodobacter sphaeroides) protein is Membrane protein insertase YidC.